Consider the following 79-residue polypeptide: Cyclin-dependent kinases regulatory subunit 2 (79 aa).

The residue at position 4 (K4) is an N6-acetyllysine.

Belongs to the CKS family. Forms a homohexamer that can probably bind six kinase subunits.

In terms of biological role, binds to the catalytic subunit of the cyclin dependent kinases and is essential for their biological function. The chain is Cyclin-dependent kinases regulatory subunit 2 (CKS2) from Bos taurus (Bovine).